Consider the following 280-residue polypeptide: Beta-lactamase OXA-58 (280 aa).

Residues 1–18 form the signal peptide; the sequence is MKLLKILSLVCLSISIGA. Cysteine 19 carries N-palmitoyl cysteine lipidation. Cysteine 19 is lipidated: S-diacylglycerol cysteine. Serine 83 functions as the Acyl-ester intermediate in the catalytic mechanism. 6 residues coordinate a beta-lactam: serine 83, lysine 86, serine 130, serine 221, tryptophan 223, and arginine 263. An N6-carboxylysine modification is found at lysine 86.

It belongs to the class-D beta-lactamase family. As to quaternary structure, monomer. Dimer. Carboxylated on the epsilon-amino group of a lysine, with the resulting carbamate functional group serving as a general base. Probably N-carboxylated at Lys-86 at neutral pH in vivo and undergoes complete N-decarboxylation, at pH 4.1, in vitro. N-carboxylation at Lys-86 probably increases catalytic activity under physiological conditions.

The protein resides in the cell membrane. It catalyses the reaction a beta-lactam + H2O = a substituted beta-amino acid. Activated approximately 3-fold by the presence of 0.1M NaHCO3. In terms of biological role, class D beta-lactamase which confers resistance to the beta-lactam antibiotics, including penicillins and oxacillin, and moderate resistance to carbapenems such as imipenem; in the DH10B strain of E.coli. Acts via hydrolysis of the beta-lactam ring. Has benzylpenicillin-, oxacillin-, cephalothin- and imipenem-hydrolyzing activities. This is Beta-lactamase OXA-58 from Acinetobacter baumannii.